Consider the following 110-residue polypeptide: Nucleoid-associated protein Mvan_5528 (110 aa).

The protein belongs to the YbaB/EbfC family. As to quaternary structure, homodimer.

It is found in the cytoplasm. The protein localises to the nucleoid. Binds to DNA and alters its conformation. May be involved in regulation of gene expression, nucleoid organization and DNA protection. The protein is Nucleoid-associated protein Mvan_5528 of Mycolicibacterium vanbaalenii (strain DSM 7251 / JCM 13017 / BCRC 16820 / KCTC 9966 / NRRL B-24157 / PYR-1) (Mycobacterium vanbaalenii).